The following is a 227-amino-acid chain: Pectinesterase inhibitor 28 (227 aa).

Residues 1–25 (MASSMAPAAAMAILLLALLMPATLC) form the signal peptide. The interval 28–50 (SGPPSSKHGHGGHAKRAPPPASP) is disordered. Residues 34–43 (KHGHGGHAKR) show a composition bias toward basic residues. Cys-66 and Cys-75 form a disulfide bridge. N-linked (GlcNAc...) asparagine glycans are attached at residues Asn-67, Asn-104, and Asn-117. A disulfide bridge links Cys-139 with Cys-179.

Belongs to the PMEI family. As to expression, expressed in roots, leaves, culms and flag leaves.

Its subcellular location is the secreted. It localises to the extracellular space. It is found in the apoplast. In terms of biological role, pectin methylesterase (PME) inhibitor that inhibits PME in vitro. Functions as a critical structural modulator by regulating the degree of pectin methylesterification and the physiochemical properties of the cell wall components. The chain is Pectinesterase inhibitor 28 from Oryza sativa subsp. japonica (Rice).